The primary structure comprises 246 residues: 23S rRNA (guanosine-2'-O-)-methyltransferase RlmB (246 aa).

Glycine 198, isoleucine 218, and leucine 227 together coordinate S-adenosyl-L-methionine.

It belongs to the class IV-like SAM-binding methyltransferase superfamily. RNA methyltransferase TrmH family. RlmB subfamily.

Its subcellular location is the cytoplasm. The enzyme catalyses guanosine(2251) in 23S rRNA + S-adenosyl-L-methionine = 2'-O-methylguanosine(2251) in 23S rRNA + S-adenosyl-L-homocysteine + H(+). Functionally, specifically methylates the ribose of guanosine 2251 in 23S rRNA. This Shewanella oneidensis (strain ATCC 700550 / JCM 31522 / CIP 106686 / LMG 19005 / NCIMB 14063 / MR-1) protein is 23S rRNA (guanosine-2'-O-)-methyltransferase RlmB.